Consider the following 649-residue polypeptide: MNHRRSKFARIDSMGVDGKLKSVRGRLKKVYGKMKTLENWRKTVLLACVVALAIDPLFLFIPLIDSQRFCFTFDKTLVAVVCVIRTFIDTFYVIHIIYYLITETIAPRSQASLRGEIVVHSKATLKTRLLFHFIVDIISVLPIPQVVVLTLIPLSASLVSERILKWIILSQYVPRIIRMYPLYKEVTRAFGTVAESKWAGAALNLFLYMLHSYVFGAFWYLSSIERKSKCWRAACARTSDCNLTVTDLLCKRAGSDNIRFLNTSCPLIDPAQITNSTDFDFGMYIDALKSGVLEVKPKDFPRKFVYCFWWGLRNISALGQNLETSNSAGEIFFAIIICVSGLLLFAVLIGNVQKYLQSSTTRVDEMEEKRRDTEKWMSYRVIPEYLKERIRRFEDYKWRETKGTEEEALLRSLPKDLRLETKRYLYLDMLKRVPWLNIMDDGWLLEAVCDRVKSVFYLANSFIVREGHPVEEMLIVTRGKLKSTTGSHEMGVRNNCCDLQDGDICGELLFNGSRLPTSTRTVMTLTEVEGFILLPDDIKFIASHLNVFQRQKLQRTFRLYSQQWRSWAAFFIQAAWRKHCKRKLSKTRDNENIPQGTQLNLASTLYVSRFVSKALQNRRKDTADCSSSPDMSPPVPHKPADLEFAKAEA.

Over 1–43 (MNHRRSKFARIDSMGVDGKLKSVRGRLKKVYGKMKTLENWRKT) the chain is Cytoplasmic. Residues 44–64 (VLLACVVALAIDPLFLFIPLI) traverse the membrane as a helical segment. Topologically, residues 65–76 (DSQRFCFTFDKT) are extracellular. Residues 77 to 97 (LVAVVCVIRTFIDTFYVIHII) traverse the membrane as a helical segment. Residues 98–128 (YYLITETIAPRSQASLRGEIVVHSKATLKTR) are Cytoplasmic-facing. Residues 129–149 (LLFHFIVDIISVLPIPQVVVL) traverse the membrane as a helical segment. Topologically, residues 150–162 (TLIPLSASLVSER) are extracellular. A helical membrane pass occupies residues 163-183 (ILKWIILSQYVPRIIRMYPLY). Over 184–200 (KEVTRAFGTVAESKWAG) the chain is Cytoplasmic. Residues 201–221 (AALNLFLYMLHSYVFGAFWYL) traverse the membrane as a helical segment. At 222 to 329 (SSIERKSKCW…QNLETSNSAG (108 aa)) the chain is on the extracellular side. The chain crosses the membrane as a helical span at residues 330–350 (EIFFAIIICVSGLLLFAVLIG). The Cytoplasmic portion of the chain corresponds to 351-649 (NVQKYLQSST…ADLEFAKAEA (299 aa)). A nucleoside 3',5'-cyclic phosphate-binding positions include 436 to 559 (LNIM…TFRL) and Glu507. Residues 545–560 (LNVFQRQKLQRTFRLY) form a calmodulin-binding region. The region spanning 565-594 (RSWAAFFIQAAWRKHCKRKLSKTRDNENIP) is the IQ domain. The disordered stretch occupies residues 618 to 649 (RRKDTADCSSSPDMSPPVPHKPADLEFAKAEA). Positions 638–649 (KPADLEFAKAEA) are enriched in basic and acidic residues.

The protein belongs to the cyclic nucleotide-gated cation channel (TC 1.A.1.5) family. As to quaternary structure, homotetramer or heterotetramer.

Its subcellular location is the cell membrane. In terms of biological role, probable cyclic nucleotide-gated ion channel. The sequence is that of Probable cyclic nucleotide-gated ion channel 12 (CNGC12) from Arabidopsis thaliana (Mouse-ear cress).